Reading from the N-terminus, the 93-residue chain is Sec-independent protein translocase protein TatA (93 aa).

Residues 1–21 form a helical membrane-spanning segment; it reads MGAMSPWHWAIVALVVVILFG. The tract at residues 44–93 is disordered; sequence KEMQNDNSTPAPTAQQSAPAELPVADTTTAPVTPPAPVQPQPQHTEPKSA. A compositionally biased stretch (low complexity) spans 51–74; that stretch reads STPAPTAQQSAPAELPVADTTTAP.

The protein belongs to the TatA/E family. As to quaternary structure, the Tat system comprises two distinct complexes: a TatABC complex, containing multiple copies of TatA, TatB and TatC subunits, and a separate TatA complex, containing only TatA subunits. Substrates initially bind to the TatABC complex, which probably triggers association of the separate TatA complex to form the active translocon.

It is found in the cell membrane. In terms of biological role, part of the twin-arginine translocation (Tat) system that transports large folded proteins containing a characteristic twin-arginine motif in their signal peptide across membranes. TatA could form the protein-conducting channel of the Tat system. The protein is Sec-independent protein translocase protein TatA of Rhodococcus opacus (strain B4).